We begin with the raw amino-acid sequence, 87 residues long: Phosphoribosyl-ATP pyrophosphatase (87 aa).

This sequence belongs to the PRA-PH family.

The protein resides in the cytoplasm. The enzyme catalyses 1-(5-phospho-beta-D-ribosyl)-ATP + H2O = 1-(5-phospho-beta-D-ribosyl)-5'-AMP + diphosphate + H(+). Its pathway is amino-acid biosynthesis; L-histidine biosynthesis; L-histidine from 5-phospho-alpha-D-ribose 1-diphosphate: step 2/9. This Leifsonia xyli subsp. xyli (strain CTCB07) protein is Phosphoribosyl-ATP pyrophosphatase.